Consider the following 240-residue polypeptide: Proteasome subunit beta type-1 (240 aa).

Residue methionine 1 is modified to N-acetylmethionine. The propeptide occupies 1–27 (MLSTAAYRDPDRELVMGPQGSAGPVQM). An O-linked (GlcNAc) serine glycan is attached at serine 57. 2 positions are modified to phosphoserine: serine 61 and serine 67. Tyrosine 149 carries the phosphotyrosine modification. Serine 161 carries the post-translational modification Phosphoserine. Residue lysine 203 is modified to N6-acetyllysine. Serine 208 carries O-linked (GlcNAc) serine glycosylation.

It belongs to the peptidase T1B family. The 26S proteasome consists of a 20S proteasome core and two 19S regulatory subunits. The 20S proteasome core is a barrel-shaped complex made of 28 subunits that are arranged in four stacked rings. The two outer rings are each formed by seven alpha subunits, and the two inner rings are formed by seven beta subunits. The proteolytic activity is exerted by three beta-subunits PSMB5, PSMB6 and PSMB7. Interacts with SERPINB2. Interacts with RFPL4A. In terms of tissue distribution, ubiquitous.

It localises to the cytoplasm. The protein resides in the nucleus. Functionally, non-catalytic component of the 20S core proteasome complex involved in the proteolytic degradation of most intracellular proteins. This complex plays numerous essential roles within the cell by associating with different regulatory particles. Associated with two 19S regulatory particles, forms the 26S proteasome and thus participates in the ATP-dependent degradation of ubiquitinated proteins. The 26S proteasome plays a key role in the maintenance of protein homeostasis by removing misfolded or damaged proteins that could impair cellular functions, and by removing proteins whose functions are no longer required. Associated with the PA200 or PA28, the 20S proteasome mediates ubiquitin-independent protein degradation. This type of proteolysis is required in several pathways including spermatogenesis (20S-PA200 complex) or generation of a subset of MHC class I-presented antigenic peptides (20S-PA28 complex). The protein is Proteasome subunit beta type-1 (Psmb1) of Rattus norvegicus (Rat).